Reading from the N-terminus, the 2148-residue chain is Polyketide synthase 1 (2148 aa).

Residues 19–261 form an N-terminal acylcarrier protein transacylase domain (SAT) region; sequence FIFGDQSSCN…TPLAVHAPYH (243 aa). The Ketosynthase family 3 (KS3) domain occupies 394–829; it reads ESKIAIIGMS…GGNTALLVED (436 aa). Residues Cys-566, His-701, and His-745 each act as for beta-ketoacyl synthase activity in the active site. Residues 929–1233 form a malonyl-CoA:ACP transacylase (MAT) domain region; that stretch reads AFVFSGQGSQ…PSLMRNKDGW (305 aa). Residue Ser-1018 is the For acyl/malonyl transferase activity of the active site. The product template (PT) domain stretch occupies residues 1310-1624; the sequence is TASVHRIVHE…RKVLNTAMPP (315 aa). Positions 1314–1447 are N-terminal hotdog fold; sequence HRIVHESVEK…SSLHFEQPKV (134 aa). The 306-residue stretch at 1314-1619 folds into the PKS/mFAS DH domain; that stretch reads HRIVHESVEK…FQGIPRKVLN (306 aa). His-1346 serves as the catalytic Proton acceptor; for dehydratase activity. The tract at residues 1474–1619 is C-terminal hotdog fold; that stretch reads LNSRMSSGVI…FQGIPRKVLN (146 aa). Asp-1533 functions as the Proton donor; for dehydratase activity in the catalytic mechanism. Residues 1619 to 1655 are disordered; sequence NTAMPPPKSQNEAPVRSGPAKPAAKPPRSASSEHSGH. Residues 1634–1650 are compositionally biased toward low complexity; the sequence is RSGPAKPAAKPPRSASS. The Carrier 1 domain maps to 1678 to 1752; sequence RNPMLPVFKI…DLAAHLGLDT (75 aa). Residue Ser-1712 is modified to O-(pantetheine 4'-phosphoryl)serine. Low complexity-rich tracts occupy residues 1757–1769 and 1779–1796; these read QSSG…GGLS and TSSV…SVSG. The tract at residues 1757–1796 is disordered; it reads QSSGQSSSFGGLSPRSDSIGEITSSVTTPPSLSPRSSVSG. In terms of domain architecture, Carrier 2 spans 1793–1870; the sequence is SVSGSQCKDV…SFKHMFQQGH (78 aa). Ser-1830 is modified (O-(pantetheine 4'-phosphoryl)serine). The segment at 1882-2146 is thioesterase (TE) domain; that stretch reads LKQYRATSTL…ERVAAFIRST (265 aa). The For thioesterase activity role is filled by Ser-1973.

Polyketide synthase; part of the Pks1 gene cluster that mediates the biosynthesis of an anthraquinone derivative pigment that contributes to conidial pigmentation that provides protection from UV radiation, heat and cold stress. The polyketide synthase Pks1 produces 1-acetyl-2,4,6,8-tetrahydroxy-9,10-anthraquinone though condensation of acetyl-CoA with malonyl-CoA. The dehydratase EthD and the laccase Mlac1 further convert the anthraquinone derivative into the final conidial pigment. The protein is Polyketide synthase 1 of Metarhizium anisopliae (strain ARSEF 549).